We begin with the raw amino-acid sequence, 573 residues long: Sulfite reductase [NADPH] hemoprotein beta-component (573 aa).

4 residues coordinate [4Fe-4S] cluster: C438, C444, C483, and C487. C487 contributes to the siroheme binding site.

Belongs to the nitrite and sulfite reductase 4Fe-4S domain family. In terms of assembly, alpha(8)-beta(8). The alpha component is a flavoprotein, the beta component is a hemoprotein. Siroheme is required as a cofactor. [4Fe-4S] cluster serves as cofactor.

The catalysed reaction is hydrogen sulfide + 3 NADP(+) + 3 H2O = sulfite + 3 NADPH + 4 H(+). It participates in sulfur metabolism; hydrogen sulfide biosynthesis; hydrogen sulfide from sulfite (NADPH route): step 1/1. Its function is as follows. Component of the sulfite reductase complex that catalyzes the 6-electron reduction of sulfite to sulfide. This is one of several activities required for the biosynthesis of L-cysteine from sulfate. The chain is Sulfite reductase [NADPH] hemoprotein beta-component from Nitrosomonas europaea (strain ATCC 19718 / CIP 103999 / KCTC 2705 / NBRC 14298).